The sequence spans 201 residues: MPIGVPRVPFRLPGEEEAVWVDVYNRLYRERLLFLGQNVDDEIANQLIGIMIYLNGEDESKDMYMYINSPGGAVLAGISVYDAMQFVVPDVHTICMGLAASMGSFILTGGEITKRIALPHARVMIHQPASSYYDGQAGECMMEAEEVLKLRDCITKVYVQRTGKPAWLISEDMERDVFMSAKEAQEYGIVDLVASDTNSTT.

Serine 101 serves as the catalytic Nucleophile. Histidine 126 is an active-site residue.

It belongs to the peptidase S14 family. In terms of assembly, component of the chloroplastic Clp protease core complex.

The protein resides in the plastid. It is found in the chloroplast stroma. The enzyme catalyses Hydrolysis of proteins to small peptides in the presence of ATP and magnesium. alpha-casein is the usual test substrate. In the absence of ATP, only oligopeptides shorter than five residues are hydrolyzed (such as succinyl-Leu-Tyr-|-NHMec, and Leu-Tyr-Leu-|-Tyr-Trp, in which cleavage of the -Tyr-|-Leu- and -Tyr-|-Trp bonds also occurs).. Functionally, cleaves peptides in various proteins in a process that requires ATP hydrolysis. Has a chymotrypsin-like activity. Plays a major role in the degradation of misfolded proteins. The sequence is that of ATP-dependent Clp protease proteolytic subunit from Staurastrum punctulatum (Green alga).